Here is a 162-residue protein sequence, read N- to C-terminus: NADH-quinone oxidoreductase subunit I (162 aa).

4Fe-4S ferredoxin-type domains follow at residues 53–83 (LRRYPNGEERCIACKLCEAVCPAQAITIEAE) and 93–122 (TRYDIDMTKCIYCGFCQEACPVDAIVEGPN). The [4Fe-4S] cluster site is built by Cys63, Cys66, Cys69, Cys73, Cys102, Cys105, Cys108, and Cys112.

The protein belongs to the complex I 23 kDa subunit family. In terms of assembly, NDH-1 is composed of 14 different subunits. Subunits NuoA, H, J, K, L, M, N constitute the membrane sector of the complex. It depends on [4Fe-4S] cluster as a cofactor.

Its subcellular location is the cell inner membrane. The enzyme catalyses a quinone + NADH + 5 H(+)(in) = a quinol + NAD(+) + 4 H(+)(out). NDH-1 shuttles electrons from NADH, via FMN and iron-sulfur (Fe-S) centers, to quinones in the respiratory chain. The immediate electron acceptor for the enzyme in this species is believed to be ubiquinone. Couples the redox reaction to proton translocation (for every two electrons transferred, four hydrogen ions are translocated across the cytoplasmic membrane), and thus conserves the redox energy in a proton gradient. In Sphingopyxis alaskensis (strain DSM 13593 / LMG 18877 / RB2256) (Sphingomonas alaskensis), this protein is NADH-quinone oxidoreductase subunit I.